Here is a 146-residue protein sequence, read N- to C-terminus: Small ribosomal subunit protein uS13A (146 aa).

Residue Ser-2 is modified to N-acetylserine. Lys-36 participates in a covalent cross-link: Glycyl lysine isopeptide (Lys-Gly) (interchain with G-Cter in ubiquitin). N6-methyllysine; by RKM1 is present on Lys-48. Glycyl lysine isopeptide (Lys-Gly) (interchain with G-Cter in ubiquitin) cross-links involve residues Lys-49, Lys-80, and Lys-96.

It belongs to the universal ribosomal protein uS13 family. As to quaternary structure, component of the small ribosomal subunit (SSU). Mature yeast ribosomes consist of a small (40S) and a large (60S) subunit. The 40S small subunit contains 1 molecule of ribosomal RNA (18S rRNA) and 33 different proteins (encoded by 57 genes). The large 60S subunit contains 3 rRNA molecules (25S, 5.8S and 5S rRNA) and 46 different proteins (encoded by 81 genes). Post-translationally, N-terminally acetylated by acetyltransferase NatA.

The protein resides in the cytoplasm. Component of the ribosome, a large ribonucleoprotein complex responsible for the synthesis of proteins in the cell. The small ribosomal subunit (SSU) binds messenger RNAs (mRNAs) and translates the encoded message by selecting cognate aminoacyl-transfer RNA (tRNA) molecules. The large subunit (LSU) contains the ribosomal catalytic site termed the peptidyl transferase center (PTC), which catalyzes the formation of peptide bonds, thereby polymerizing the amino acids delivered by tRNAs into a polypeptide chain. The nascent polypeptides leave the ribosome through a tunnel in the LSU and interact with protein factors that function in enzymatic processing, targeting, and the membrane insertion of nascent chains at the exit of the ribosomal tunnel. This Saccharomyces cerevisiae (strain ATCC 204508 / S288c) (Baker's yeast) protein is Small ribosomal subunit protein uS13A.